Consider the following 81-residue polypeptide: ATP synthase subunit c, chloroplastic (81 aa).

2 helical membrane passes run 3 to 23 (PLVF…ASIG) and 57 to 77 (LAFM…LLFA).

The protein belongs to the ATPase C chain family. As to quaternary structure, F-type ATPases have 2 components, F(1) - the catalytic core - and F(0) - the membrane proton channel. F(1) has five subunits: alpha(3), beta(3), gamma(1), delta(1), epsilon(1). F(0) has four main subunits: a(1), b(1), b'(1) and c(10-14). The alpha and beta chains form an alternating ring which encloses part of the gamma chain. F(1) is attached to F(0) by a central stalk formed by the gamma and epsilon chains, while a peripheral stalk is formed by the delta, b and b' chains.

The protein resides in the plastid. It is found in the chloroplast thylakoid membrane. F(1)F(0) ATP synthase produces ATP from ADP in the presence of a proton or sodium gradient. F-type ATPases consist of two structural domains, F(1) containing the extramembraneous catalytic core and F(0) containing the membrane proton channel, linked together by a central stalk and a peripheral stalk. During catalysis, ATP synthesis in the catalytic domain of F(1) is coupled via a rotary mechanism of the central stalk subunits to proton translocation. Its function is as follows. Key component of the F(0) channel; it plays a direct role in translocation across the membrane. A homomeric c-ring of between 10-14 subunits forms the central stalk rotor element with the F(1) delta and epsilon subunits. This is ATP synthase subunit c, chloroplastic from Atropa belladonna (Belladonna).